Here is a 212-residue protein sequence, read N- to C-terminus: Peroxiredoxin 2 (212 aa).

The Thioredoxin domain maps to 7–162; the sequence is PLIGEKFPEM…ILRSIRALQL (156 aa). Cys49 functions as the Cysteine sulfenic acid (-SOH) intermediate in the catalytic mechanism. Arg125 provides a ligand contact to substrate.

This sequence belongs to the peroxiredoxin family. Prx6 subfamily. As to quaternary structure, homodecamer. Pentamer of dimers that assemble into a ring structure.

The protein localises to the cytoplasm. The enzyme catalyses a hydroperoxide + [thioredoxin]-dithiol = an alcohol + [thioredoxin]-disulfide + H2O. Its function is as follows. Thiol-specific peroxidase that catalyzes the reduction of hydrogen peroxide and organic hydroperoxides to water and alcohols, respectively. Plays a role in cell protection against oxidative stress by detoxifying peroxides. The sequence is that of Peroxiredoxin 2 from Sulfurisphaera tokodaii (strain DSM 16993 / JCM 10545 / NBRC 100140 / 7) (Sulfolobus tokodaii).